We begin with the raw amino-acid sequence, 256 residues long: Small ribosomal subunit protein eS1 (256 aa).

At Ala2 the chain carries N-acetylalanine; partial.

Belongs to the eukaryotic ribosomal protein eS1 family. Component of the small ribosomal subunit. Mature ribosomes consist of a small (40S) and a large (60S) subunit. The 40S subunit contains about 33 different proteins and 1 molecule of RNA (18S). The 60S subunit contains about 49 different proteins and 3 molecules of RNA (25S, 5.8S and 5S).

It is found in the cytoplasm. The protein is Small ribosomal subunit protein eS1 (rps1) of Sclerotinia sclerotiorum (strain ATCC 18683 / 1980 / Ss-1) (White mold).